We begin with the raw amino-acid sequence, 269 residues long: 4-hydroxy-tetrahydrodipicolinate reductase (269 aa).

Position 11–16 (11–16 (GPIGRM)) interacts with NAD(+). Residue lysine 39 coordinates NADP(+). Residues 101–103 (GTT) and 125–128 (ASNF) contribute to the NAD(+) site. Histidine 158 functions as the Proton donor/acceptor in the catalytic mechanism. Histidine 159 contributes to the (S)-2,3,4,5-tetrahydrodipicolinate binding site. Lysine 162 serves as the catalytic Proton donor. 168 to 169 (GT) contributes to the (S)-2,3,4,5-tetrahydrodipicolinate binding site.

This sequence belongs to the DapB family. As to quaternary structure, homotetramer.

It localises to the cytoplasm. It carries out the reaction (S)-2,3,4,5-tetrahydrodipicolinate + NAD(+) + H2O = (2S,4S)-4-hydroxy-2,3,4,5-tetrahydrodipicolinate + NADH + H(+). It catalyses the reaction (S)-2,3,4,5-tetrahydrodipicolinate + NADP(+) + H2O = (2S,4S)-4-hydroxy-2,3,4,5-tetrahydrodipicolinate + NADPH + H(+). Its pathway is amino-acid biosynthesis; L-lysine biosynthesis via DAP pathway; (S)-tetrahydrodipicolinate from L-aspartate: step 4/4. Functionally, catalyzes the conversion of 4-hydroxy-tetrahydrodipicolinate (HTPA) to tetrahydrodipicolinate. This Buchnera aphidicola subsp. Acyrthosiphon pisum (strain 5A) protein is 4-hydroxy-tetrahydrodipicolinate reductase.